A 224-amino-acid chain; its full sequence is Redox-sensing transcriptional repressor Rex (224 aa).

The segment at residues 17-56 is a DNA-binding region (H-T-H motif); it reads RYHRYLEELLKNDVKRISSRELSEKMGVTASQIRQDLNNF. 91–96 contributes to the NAD(+) binding site; that stretch reads GAGNLG.

The protein belongs to the transcriptional regulatory Rex family. As to quaternary structure, homodimer.

The protein localises to the cytoplasm. Functionally, modulates transcription in response to changes in cellular NADH/NAD(+) redox state. This Thermoanaerobacter sp. (strain X514) protein is Redox-sensing transcriptional repressor Rex.